Consider the following 98-residue polypeptide: NADH-ubiquinone oxidoreductase chain 4L (98 aa).

The next 3 helical transmembrane spans lie at 1-21 (MSLV…GLLM), 29-49 (ALLC…LTIL), and 61-81 (IILL…LVMI).

It belongs to the complex I subunit 4L family. In terms of assembly, core subunit of respiratory chain NADH dehydrogenase (Complex I) which is composed of 45 different subunits.

It is found in the mitochondrion inner membrane. It catalyses the reaction a ubiquinone + NADH + 5 H(+)(in) = a ubiquinol + NAD(+) + 4 H(+)(out). In terms of biological role, core subunit of the mitochondrial membrane respiratory chain NADH dehydrogenase (Complex I) which catalyzes electron transfer from NADH through the respiratory chain, using ubiquinone as an electron acceptor. Part of the enzyme membrane arm which is embedded in the lipid bilayer and involved in proton translocation. The chain is NADH-ubiquinone oxidoreductase chain 4L (MT-ND4L) from Delphinapterus leucas (Beluga whale).